The chain runs to 1070 residues: DNA-directed RNA polymerase subunit beta (1070 aa).

It belongs to the RNA polymerase beta chain family. In terms of assembly, in plastids the minimal PEP RNA polymerase catalytic core is composed of four subunits: alpha, beta, beta', and beta''. When a (nuclear-encoded) sigma factor is associated with the core the holoenzyme is formed, which can initiate transcription.

The protein resides in the plastid. It is found in the chloroplast. It carries out the reaction RNA(n) + a ribonucleoside 5'-triphosphate = RNA(n+1) + diphosphate. In terms of biological role, DNA-dependent RNA polymerase catalyzes the transcription of DNA into RNA using the four ribonucleoside triphosphates as substrates. The chain is DNA-directed RNA polymerase subunit beta from Populus alba (White poplar).